The following is a 264-amino-acid chain: Thymidylate synthase (264 aa).

Arg21 is a binding site for dUMP. His51 is a (6R)-5,10-methylene-5,6,7,8-tetrahydrofolate binding site. Residue 126–127 participates in dUMP binding; that stretch reads RR. The active-site Nucleophile is the Cys146. DUMP-binding positions include 166-169, Asn177, and 207-209; these read RSAD and HLY. Asp169 lines the (6R)-5,10-methylene-5,6,7,8-tetrahydrofolate pocket. Position 263 (Ala263) interacts with (6R)-5,10-methylene-5,6,7,8-tetrahydrofolate.

This sequence belongs to the thymidylate synthase family. Bacterial-type ThyA subfamily. As to quaternary structure, homodimer.

The protein localises to the cytoplasm. The enzyme catalyses dUMP + (6R)-5,10-methylene-5,6,7,8-tetrahydrofolate = 7,8-dihydrofolate + dTMP. Its pathway is pyrimidine metabolism; dTTP biosynthesis. Its function is as follows. Catalyzes the reductive methylation of 2'-deoxyuridine-5'-monophosphate (dUMP) to 2'-deoxythymidine-5'-monophosphate (dTMP) while utilizing 5,10-methylenetetrahydrofolate (mTHF) as the methyl donor and reductant in the reaction, yielding dihydrofolate (DHF) as a by-product. This enzymatic reaction provides an intracellular de novo source of dTMP, an essential precursor for DNA biosynthesis. In Bdellovibrio bacteriovorus (strain ATCC 15356 / DSM 50701 / NCIMB 9529 / HD100), this protein is Thymidylate synthase.